Here is a 212-residue protein sequence, read N- to C-terminus: Agamous-like MADS-box protein MADS9 (212 aa).

Positions 1-61 constitute an MADS-box domain; that stretch reads MGRGKIEIKR…GKMHEYCSPS (61 aa). The 87-residue stretch at 84–170 folds into the K-box domain; it reads HENLNNELDR…NYIVHHQGMP (87 aa).

As to expression, expressed during flower development in stamens and petals.

It localises to the nucleus. Functionally, probable transcription factor that may play role in specifying stamen and petal organ identity. The sequence is that of Agamous-like MADS-box protein MADS9 from Vitis vinifera (Grape).